The following is a 209-amino-acid chain: Ribosomal RNA large subunit methyltransferase E (209 aa).

Residues Gly-63, Trp-65, Asp-83, Asp-99, and Asp-124 each contribute to the S-adenosyl-L-methionine site. The active-site Proton acceptor is Lys-164.

Belongs to the class I-like SAM-binding methyltransferase superfamily. RNA methyltransferase RlmE family.

Its subcellular location is the cytoplasm. It carries out the reaction uridine(2552) in 23S rRNA + S-adenosyl-L-methionine = 2'-O-methyluridine(2552) in 23S rRNA + S-adenosyl-L-homocysteine + H(+). Specifically methylates the uridine in position 2552 of 23S rRNA at the 2'-O position of the ribose in the fully assembled 50S ribosomal subunit. This is Ribosomal RNA large subunit methyltransferase E from Photobacterium profundum (strain SS9).